The sequence spans 349 residues: 2-oxoglutarate-Fe(II) type oxidoreductase ppzD (349 aa).

Residues 200-311 form the Fe2OG dioxygenase domain; that stretch reads NTSELRLNHY…RYSVAYFGKP (112 aa). Positions 227, 229, and 287 each coordinate Fe cation. Position 302 (Arg-302) interacts with 2-oxoglutarate.

It belongs to the iron/ascorbate-dependent oxidoreductase family. Fe(2+) serves as cofactor.

It catalyses the reaction L-proline + 2-oxoglutarate + O2 = trans-4-hydroxy-L-proline + succinate + CO2. The enzyme catalyses L-proline + 2-oxoglutarate + O2 = trans-3-hydroxy-L-proline + succinate + CO2. The catalysed reaction is D-proline + 2-oxoglutarate + O2 = cis-4-hydroxy-D-proline + succinate + CO2. Its pathway is secondary metabolite biosynthesis. Its function is as follows. 2-oxoglutarate-Fe(II) type oxidoreductase; part of the gene cluster that mediates the biosynthesis of pyrrolopyrazines, secondary metabolites showing insecticidal activity. Within the pathway, ppzD converts L-proline into trans-4-hydroxy-L-proline as a major product, yielding a key precursor for peramine biosynthesis. PpzD is also able to convert L-proline into trans-3-hydroxy-L-proline. The single multifunctional NRPS ppzA is sufficient to produce peramine via condensation of 1-pyrroline-5-carboxylate and arginine, N-methylation of the alpha-amino group of arginine and reduction of the thioester and the cyclization to form an iminium ion resulting in release from the peptide synthetase. Deprotonation of this intermediate and oxidation of the pyrroline ring would give rise to peramine. In Epichloe species that produce only peramine, the peramine synthetase gene is not localized in a gene cluster, in contrast to Metarhizium species that contain additional pyrrolopyrazine biosynthesis genes. The 2-oxoglutarate-Fe(II) type oxidoreductase ppzC hydroxylates peramine to yield the newly identified compound 8-hydroxyperamine whereas ppzD converts L-proline into trans-4-hydroxy-L-proline, a precursor of peramine biosynthesis. In Metarhizium majus (strain ARSEF 297), this protein is 2-oxoglutarate-Fe(II) type oxidoreductase ppzD (ppzD).